A 445-amino-acid chain; its full sequence is Ribosomal protein uS12 methylthiotransferase RimO (445 aa).

Positions 10–120 (PKVGFVSLGC…VVNAVHEVVP (111 aa)) constitute an MTTase N-terminal domain. [4Fe-4S] cluster-binding residues include cysteine 19, cysteine 55, cysteine 84, cysteine 153, cysteine 157, and cysteine 160. One can recognise a Radical SAM core domain in the interval 139–378 (LTPRHYAYLK…AHQQEISSAR (240 aa)). Residues 380-445 (QQRIGKEIEV…DEYDLWAETL (66 aa)) enclose the TRAM domain.

This sequence belongs to the methylthiotransferase family. RimO subfamily. [4Fe-4S] cluster is required as a cofactor.

It localises to the cytoplasm. The enzyme catalyses L-aspartate(89)-[ribosomal protein uS12]-hydrogen + (sulfur carrier)-SH + AH2 + 2 S-adenosyl-L-methionine = 3-methylsulfanyl-L-aspartate(89)-[ribosomal protein uS12]-hydrogen + (sulfur carrier)-H + 5'-deoxyadenosine + L-methionine + A + S-adenosyl-L-homocysteine + 2 H(+). Its function is as follows. Catalyzes the methylthiolation of an aspartic acid residue of ribosomal protein uS12. This chain is Ribosomal protein uS12 methylthiotransferase RimO, found in Pseudomonas fluorescens (strain ATCC BAA-477 / NRRL B-23932 / Pf-5).